We begin with the raw amino-acid sequence, 940 residues long: UvrABC system protein A (940 aa).

31-38 serves as a coordination point for ATP; sequence GLSGSGKS. The C4-type zinc finger occupies 252-279; the sequence is CPHCGYSMRELEPRLFSFNNPAGACPTC. 2 ABC transporter domains span residues 309-586 and 606-936; these read WDQK…PNSL and KDAK…RFLK. 639 to 646 serves as a coordination point for ATP; that stretch reads GVSGSGKS. A C4-type zinc finger spans residues 739–765; the sequence is CEACQGDGVIKVEMHFLPDVYVPCDVC.

It belongs to the ABC transporter superfamily. UvrA family. As to quaternary structure, forms a heterotetramer with UvrB during the search for lesions.

It localises to the cytoplasm. In terms of biological role, the UvrABC repair system catalyzes the recognition and processing of DNA lesions. UvrA is an ATPase and a DNA-binding protein. A damage recognition complex composed of 2 UvrA and 2 UvrB subunits scans DNA for abnormalities. When the presence of a lesion has been verified by UvrB, the UvrA molecules dissociate. This is UvrABC system protein A from Vibrio cholerae serotype O1 (strain ATCC 39315 / El Tor Inaba N16961).